An 893-amino-acid chain; its full sequence is DNA mismatch repair protein MutS (893 aa).

ATP is bound at residue 638–645 (GPNMAGKS).

It belongs to the DNA mismatch repair MutS family.

Functionally, this protein is involved in the repair of mismatches in DNA. It is possible that it carries out the mismatch recognition step. This protein has a weak ATPase activity. This is DNA mismatch repair protein MutS from Lawsonia intracellularis (strain PHE/MN1-00).